The primary structure comprises 251 residues: uncharacterized protein (251 aa).

It belongs to the FAM243 family.

This is an uncharacterized protein from Homo sapiens (Human).